Reading from the N-terminus, the 129-residue chain is Protein Turandot C (129 aa).

Residues 1–21 (MNASISLLCLALLLISPFCLG) form the signal peptide.

The protein belongs to the Turandot family.

The protein localises to the secreted. Its function is as follows. A humoral factor that may play a role in stress tolerance. The chain is Protein Turandot C from Drosophila melanogaster (Fruit fly).